The chain runs to 440 residues: Ribosomal protein uS12 methylthiotransferase RimO (440 aa).

The MTTase N-terminal domain maps to 5 to 116 (PTIAISHLGC…IVNVIERAEQ (112 aa)). Positions 14, 50, 79, 154, 158, and 161 each coordinate [4Fe-4S] cluster. In terms of domain architecture, Radical SAM core spans 140 to 370 (TTTEGVAYLR…ALQQPISWRK (231 aa)). A TRAM domain is found at 372–438 (QQEVGKTVEV…EYDLFGQVVS (67 aa)).

It belongs to the methylthiotransferase family. RimO subfamily. The cofactor is [4Fe-4S] cluster.

Its subcellular location is the cytoplasm. It catalyses the reaction L-aspartate(89)-[ribosomal protein uS12]-hydrogen + (sulfur carrier)-SH + AH2 + 2 S-adenosyl-L-methionine = 3-methylsulfanyl-L-aspartate(89)-[ribosomal protein uS12]-hydrogen + (sulfur carrier)-H + 5'-deoxyadenosine + L-methionine + A + S-adenosyl-L-homocysteine + 2 H(+). Its function is as follows. Catalyzes the methylthiolation of an aspartic acid residue of ribosomal protein uS12. This is Ribosomal protein uS12 methylthiotransferase RimO from Trichormus variabilis (strain ATCC 29413 / PCC 7937) (Anabaena variabilis).